The chain runs to 812 residues: Toll-like receptor 10 (812 aa).

The first 19 residues, 1 to 19 (MRYIRSIYIFCSIVTSVRS), serve as a signal peptide directing secretion. At 20 to 577 (GASELPEERE…VHLPEISCNT (558 aa)) the chain is on the extracellular side. LRR repeat units lie at residues 24 to 46 (LPEE…PEGL), 49 to 70 (ITTT…DFRS), 73 to 94 (KLKV…TFEF), 97 to 118 (ELSY…SLAG), and 119 to 139 (LRHL…VETG). Asn-33 carries N-linked (GlcNAc...) asparagine glycosylation. Asn-140 is a glycosylation site (N-linked (GlcNAc...) asparagine). One copy of the LRR 6 repeat lies at 143–166 (HLETLGLSGAKIQKSDFQKIAHLQ). The N-linked (GlcNAc...) asparagine glycan is linked to Asn-189. 4 LRR repeats span residues 296 to 321 (SNTV…ESIY), 325 to 348 (TKMD…PMYP), 350 to 373 (RFQY…IQLP), and 374 to 395 (HLKT…SHFA). Asn-331 is a glycosylation site (N-linked (GlcNAc...) asparagine). Residue Asn-397 is glycosylated (N-linked (GlcNAc...) asparagine). 5 LRR repeats span residues 399 to 420 (SLRH…NCLW), 423 to 443 (TLVT…GCLP), 445 to 467 (NIQI…THLT), 468 to 489 (SLRE…SHFR), and 490 to 510 (RLLV…DFFQ). Residue Asn-428 is glycosylated (N-linked (GlcNAc...) asparagine). One can recognise an LRRCT domain in the interval 523-577 (NPFRCTCELRDFIQLGKYSEGMMVGWSDSYICEYPLNLKGTQLKDVHLPEISCNT). A helical transmembrane segment spans residues 578–598 (GLLIVTIVVVMLVLGMAVAFC). Residues 599-812 (CLHFDLPWYL…AISLIRTDCL (214 aa)) lie on the Cytoplasmic side of the membrane. Residues 633–776 (VQFHVFISYS…LFWANLRAAL (144 aa)) form the TIR domain.

Belongs to the Toll-like receptor family. As to quaternary structure, binds MYD88 via their respective TIR domains.

It localises to the membrane. Functionally, participates in the innate immune response to microbial agents. Acts via MYD88 and TRAF6, leading to NF-kappa-B activation, cytokine secretion and the inflammatory response. In Bos taurus (Bovine), this protein is Toll-like receptor 10 (TLR10).